The following is a 333-amino-acid chain: Glycerol-3-phosphate dehydrogenase [NAD(P)+] (333 aa).

NADPH contacts are provided by serine 10, tryptophan 11, histidine 31, arginine 32, and lysine 105. The sn-glycerol 3-phosphate site is built by lysine 105, glycine 136, and serine 138. Alanine 140 lines the NADPH pocket. Lysine 191, aspartate 244, serine 254, arginine 255, and asparagine 256 together coordinate sn-glycerol 3-phosphate. Catalysis depends on lysine 191, which acts as the Proton acceptor. Residue arginine 255 participates in NADPH binding. Positions 279 and 281 each coordinate NADPH.

Belongs to the NAD-dependent glycerol-3-phosphate dehydrogenase family.

The protein localises to the cytoplasm. It carries out the reaction sn-glycerol 3-phosphate + NAD(+) = dihydroxyacetone phosphate + NADH + H(+). The enzyme catalyses sn-glycerol 3-phosphate + NADP(+) = dihydroxyacetone phosphate + NADPH + H(+). It functions in the pathway membrane lipid metabolism; glycerophospholipid metabolism. Its function is as follows. Catalyzes the reduction of the glycolytic intermediate dihydroxyacetone phosphate (DHAP) to sn-glycerol 3-phosphate (G3P), the key precursor for phospholipid synthesis. The chain is Glycerol-3-phosphate dehydrogenase [NAD(P)+] from Chlorobium luteolum (strain DSM 273 / BCRC 81028 / 2530) (Pelodictyon luteolum).